Here is a 209-residue protein sequence, read N- to C-terminus: Small ribosomal subunit protein uS4 (209 aa).

A compositionally biased stretch (basic residues) spans 1 to 13; that stretch reads MSTKSRTRSKTRL. Disordered stretches follow at residues 1–20 and 28–49; these read MSTK…LGIP and YLEK…QDSD. Positions 95 to 160 constitute an S4 RNA-binding domain; the sequence is QRLDALVVRS…TEPFQVAAAG (66 aa).

Belongs to the universal ribosomal protein uS4 family. As to quaternary structure, part of the 30S ribosomal subunit. Contacts protein S5. The interaction surface between S4 and S5 is involved in control of translational fidelity.

One of the primary rRNA binding proteins, it binds directly to 16S rRNA where it nucleates assembly of the body of the 30S subunit. Its function is as follows. With S5 and S12 plays an important role in translational accuracy. This Clavibacter sepedonicus (Clavibacter michiganensis subsp. sepedonicus) protein is Small ribosomal subunit protein uS4.